The primary structure comprises 416 residues: Adenosylhomocysteinase (416 aa).

The substrate site is built by Thr-55, Asp-126, and Glu-151. Residue 152–154 coordinates NAD(+); that stretch reads TTT. Substrate is bound by residues Lys-181 and Asp-185. NAD(+) is bound by residues Asn-186, 215–220, Glu-238, Asn-273, 294–296, and Asn-341; these read GYGWVG and AGH.

This sequence belongs to the adenosylhomocysteinase family. NAD(+) serves as cofactor.

It is found in the cytoplasm. The enzyme catalyses S-adenosyl-L-homocysteine + H2O = L-homocysteine + adenosine. It participates in amino-acid biosynthesis; L-homocysteine biosynthesis; L-homocysteine from S-adenosyl-L-homocysteine: step 1/1. Its function is as follows. May play a key role in the regulation of the intracellular concentration of adenosylhomocysteine. The protein is Adenosylhomocysteinase of Aeropyrum pernix (strain ATCC 700893 / DSM 11879 / JCM 9820 / NBRC 100138 / K1).